The sequence spans 67 residues: Large ribosomal subunit protein uL30 (67 aa).

It belongs to the universal ribosomal protein uL30 family. As to quaternary structure, part of the 50S ribosomal subunit.

This is Large ribosomal subunit protein uL30 from Thermotoga petrophila (strain ATCC BAA-488 / DSM 13995 / JCM 10881 / RKU-1).